The sequence spans 353 residues: tRNA N6-adenosine threonylcarbamoyltransferase (353 aa).

Residues H111 and H115 each coordinate Fe cation. Residues 134-138, D167, G180, D184, and N279 contribute to the substrate site; that span reads LVSGG. A Fe cation-binding site is contributed by D307.

This sequence belongs to the KAE1 / TsaD family. Fe(2+) serves as cofactor.

It localises to the cytoplasm. It catalyses the reaction L-threonylcarbamoyladenylate + adenosine(37) in tRNA = N(6)-L-threonylcarbamoyladenosine(37) in tRNA + AMP + H(+). In terms of biological role, required for the formation of a threonylcarbamoyl group on adenosine at position 37 (t(6)A37) in tRNAs that read codons beginning with adenine. Is involved in the transfer of the threonylcarbamoyl moiety of threonylcarbamoyl-AMP (TC-AMP) to the N6 group of A37, together with TsaE and TsaB. TsaD likely plays a direct catalytic role in this reaction. The polypeptide is tRNA N6-adenosine threonylcarbamoyltransferase (Thermosynechococcus vestitus (strain NIES-2133 / IAM M-273 / BP-1)).